The chain runs to 818 residues: Sorting nexin-29 (818 aa).

The 145-residue stretch at 36–180 folds into the RUN domain; it reads SDSDSRVTCL…ILFAINIDNK (145 aa). The segment at 267–299 is disordered; sequence VSFDDDEEEQGTGDTLKKMPGTAESSEENSDRS. Residues serine 268, serine 291, serine 292, serine 330, serine 344, serine 447, and serine 452 each carry the phosphoserine modification. Disordered stretches follow at residues 343–375 and 441–462; these read KSID…PDRT and RYRE…PSAS. The span at 445–462 shows a compositional bias: low complexity; it reads ASSPGQGSPLSSLLPSAS. Positions 467–547 form a coiled coil; that stretch reads MTVHELRQAI…VLKVQLKKYV (81 aa). Phosphoserine is present on serine 642. Threonine 644 carries the phosphothreonine modification. Serine 645 and serine 649 each carry phosphoserine. Residues 659 to 782 enclose the PX domain; it reads ALINVWIPSV…PFFVDITPPG (124 aa). Residues 781–818 form a disordered region; it reads PGEPLNKSSRPKAVSRFPKLSRGHPREVRNVEPQSGDL.

It belongs to the sorting nexin family.

This Mus musculus (Mouse) protein is Sorting nexin-29 (Snx29).